We begin with the raw amino-acid sequence, 297 residues long: Formylmethanofuran--tetrahydromethanopterin formyltransferase (297 aa).

This sequence belongs to the FTR family. In terms of assembly, homotetramer.

It localises to the cytoplasm. It carries out the reaction N-formylmethanofuran + 5,6,7,8-tetrahydromethanopterin + H(+) = N(5)-formyl-5,6,7,8-tetrahydromethanopterin + methanofuran. It participates in one-carbon metabolism; methanogenesis from CO(2); 5,10-methenyl-5,6,7,8-tetrahydromethanopterin from CO(2): step 2/3. Catalyzes the reversible transfer of a formyl group from formylmethanofuran (formyl-MFR) to tetrahydromethanopterin (H(4)MPT) to produce 5-formyl tetrahydromethanopterin (5-formyl-H(4)MPT) and methanofuran (MFR). This chain is Formylmethanofuran--tetrahydromethanopterin formyltransferase, found in Methanococcoides burtonii (strain DSM 6242 / NBRC 107633 / OCM 468 / ACE-M).